A 112-amino-acid chain; its full sequence is Integration host factor subunit alpha (112 aa).

The protein belongs to the bacterial histone-like protein family. In terms of assembly, heterodimer of an alpha and a beta chain.

This protein is one of the two subunits of integration host factor, a specific DNA-binding protein that functions in genetic recombination as well as in transcriptional and translational control. The chain is Integration host factor subunit alpha from Agrobacterium fabrum (strain C58 / ATCC 33970) (Agrobacterium tumefaciens (strain C58)).